The primary structure comprises 124 residues: Small ribosomal subunit protein uS13 (124 aa).

Positions 103 to 117 (KCNARTRKGPRKTVA) are enriched in basic residues. The disordered stretch occupies residues 103-124 (KCNARTRKGPRKTVANKKIETK).

Belongs to the universal ribosomal protein uS13 family. In terms of assembly, part of the 30S ribosomal subunit. Forms a loose heterodimer with protein S19. Forms two bridges to the 50S subunit in the 70S ribosome.

In terms of biological role, located at the top of the head of the 30S subunit, it contacts several helices of the 16S rRNA. In the 70S ribosome it contacts the 23S rRNA (bridge B1a) and protein L5 of the 50S subunit (bridge B1b), connecting the 2 subunits; these bridges are implicated in subunit movement. Contacts the tRNAs in the A and P-sites. In Malacoplasma penetrans (strain HF-2) (Mycoplasma penetrans), this protein is Small ribosomal subunit protein uS13.